The chain runs to 383 residues: NIPA-like protein 2 (383 aa).

Asparagine 23 and asparagine 33 each carry an N-linked (GlcNAc...) asparagine glycan. The next 9 helical transmembrane spans lie at 46–66 (IHLF…ISLN), 88–108 (VLWL…FAAY), 115–135 (LIAP…VLFL), 144–164 (LLGM…APNI), 177–197 (FVGW…CILL), 208–228 (IVVL…SVKA), 243–263 (LTYA…VFQV), 278–298 (VVPV…IIFY), and 306–326 (FLTV…VFLV). Residues 352-383 (DKVQPDSNGLSYGTLPDGGDSTRGQCGEKKES) form a disordered region.

Belongs to the NIPA family.

It localises to the membrane. This Mus musculus (Mouse) protein is NIPA-like protein 2 (Nipal2).